The chain runs to 226 residues: uncharacterized protein (226 aa).

Positions 1–112 (MLVEDDHSIS…ELTARVKAAI (112 aa)) constitute a Response regulatory domain. D48 bears the 4-aspartylphosphate mark. A DNA-binding region (ompR/PhoB-type) is located at residues 126 to 225 (NKVIRIHQLA…LWGIGYKLGE (100 aa)).

In terms of processing, phosphorylated by YcbM.

The protein resides in the cytoplasm. Functionally, member of the two-component regulatory system YcbM/YcbL. This is an uncharacterized protein from Bacillus subtilis (strain 168).